A 79-amino-acid chain; its full sequence is Conotoxin ArMSGL-0124 (79 aa).

Residues 1–20 (MSRLGIMVLTLLLLVYMATS) form the signal peptide. Residues 21 to 44 (HQDAGEKQATQRDAINFRWKRSLT) constitute a propeptide that is removed on maturation. Intrachain disulfides connect cysteine 52–cysteine 64, cysteine 56–cysteine 73, and cysteine 63–cysteine 77. Leucine 78 bears the Leucine amide mark.

This sequence belongs to the conotoxin O3 superfamily. As to expression, expressed by the venom duct.

It localises to the secreted. This is Conotoxin ArMSGL-0124 from Conus arenatus (Sand-dusted cone).